Reading from the N-terminus, the 64-residue chain is DNA gyrase inhibitor YacG (64 aa).

Positions 9, 12, 28, and 32 each coordinate Zn(2+). The disordered stretch occupies residues 45-64; sequence KRIPSSGDLSESDDWSEEQK. Acidic residues predominate over residues 54–64; the sequence is SESDDWSEEQK.

It belongs to the DNA gyrase inhibitor YacG family. Interacts with GyrB. Zn(2+) is required as a cofactor.

In terms of biological role, inhibits all the catalytic activities of DNA gyrase by preventing its interaction with DNA. Acts by binding directly to the C-terminal domain of GyrB, which probably disrupts DNA binding by the gyrase. This Citrobacter koseri (strain ATCC BAA-895 / CDC 4225-83 / SGSC4696) protein is DNA gyrase inhibitor YacG.